A 195-amino-acid chain; its full sequence is HTH-type transcriptional regulator BetI (195 aa).

Positions 8-68 (SIRRRQLIDA…ATMRDITSQL (61 aa)) constitute an HTH tetR-type domain. The H-T-H motif DNA-binding region spans 31–50 (TIAQIARRAGVSTGIISHYF).

It participates in amine and polyamine biosynthesis; betaine biosynthesis via choline pathway [regulation]. Functionally, repressor involved in the biosynthesis of the osmoprotectant glycine betaine. It represses transcription of the choline transporter BetT and the genes of BetAB involved in the synthesis of glycine betaine. This is HTH-type transcriptional regulator BetI from Escherichia coli O17:K52:H18 (strain UMN026 / ExPEC).